The chain runs to 236 residues: 2,3,4,5-tetrahydropyridine-2,6-dicarboxylate N-acetyltransferase (236 aa).

Belongs to the transferase hexapeptide repeat family. DapH subfamily.

The catalysed reaction is (S)-2,3,4,5-tetrahydrodipicolinate + acetyl-CoA + H2O = L-2-acetamido-6-oxoheptanedioate + CoA. The protein operates within amino-acid biosynthesis; L-lysine biosynthesis via DAP pathway; LL-2,6-diaminopimelate from (S)-tetrahydrodipicolinate (acetylase route): step 1/3. In terms of biological role, catalyzes the transfer of an acetyl group from acetyl-CoA to tetrahydrodipicolinate. This Lactiplantibacillus plantarum (strain ATCC BAA-793 / NCIMB 8826 / WCFS1) (Lactobacillus plantarum) protein is 2,3,4,5-tetrahydropyridine-2,6-dicarboxylate N-acetyltransferase.